The sequence spans 331 residues: Small ribosomal subunit protein uS2 (331 aa).

Belongs to the universal ribosomal protein uS2 family.

The protein is Small ribosomal subunit protein uS2 of Rhodopseudomonas palustris (strain BisB5).